Consider the following 149-residue polypeptide: Endothelin-1 (149 aa).

A propeptide spanning residues 1–33 (AAETVVSGAELSLTANSGGEKTPPHAPGLLRRS) is cleaved from the precursor. The segment at 6-26 (VSGAELSLTANSGGEKTPPHA) is disordered. 2 disulfides stabilise this stretch: Cys36–Cys50 and Cys38–Cys46. Residues 57-149 (VNTPGHIAPY…ISQQLGNGKK (93 aa)) constitute a propeptide that is removed on maturation. The endothelin-like stretch occupies residues 93–107 (CQCANQKDKKCWNFC).

This sequence belongs to the endothelin/sarafotoxin family.

It is found in the secreted. Functionally, endothelins are endothelium-derived vasoconstrictor peptides. Probable ligand for G-protein coupled receptors EDNRA and EDNRB which activates PTK2B, BCAR1, BCAR3 and, GTPases RAP1 and RHOA cascade in glomerular mesangial cells. Also binds the DEAR/FBXW7-AS1 receptor. Promotes mesenteric arterial wall remodeling via activation of ROCK signaling and subsequent colocalization of NFATC3 with F-actin filaments. NFATC3 then translocates to the nucleus where it subsequently promotes the transcription of the smooth muscle hypertrophy and differentiation marker ACTA2. The protein is Endothelin-1 (EDN1) of Cavia porcellus (Guinea pig).